The sequence spans 291 residues: Glutathione S-transferase 2 (291 aa).

The GST N-terminal domain maps to 2–83 (SPVKVFGHPM…YILRKYGGTA (82 aa)). Glutathione-binding positions include 41 to 42 (HK), 54 to 55 (KM), and 67 to 68 (KS). The GST C-terminal domain occupies 93 to 223 (GIEELAMVDV…RVCKHMPTEF (131 aa)).

Belongs to the GST superfamily. Phi family.

The enzyme catalyses RX + glutathione = an S-substituted glutathione + a halide anion + H(+). Functionally, conjugation of reduced glutathione to a wide number of exogenous and endogenous hydrophobic electrophiles. In Triticum aestivum (Wheat), this protein is Glutathione S-transferase 2 (GSTA2).